Here is a 78-residue protein sequence, read N- to C-terminus: RTX-VII (78 aa).

The first 22 residues, 1–22 (MKTIVYLIVSILLLSSTVLVLA), serve as a signal peptide directing secretion. Positions 23-40 (EGNAASHELQEYPIEEQR) are excised as a propeptide. 4 disulfides stabilise this stretch: Cys42/Cys58, Cys47/Cys63, Cys57/Cys73, and Cys65/Cys71. An Arginine amide modification is found at Arg76.

Expressed by the venom gland.

Its subcellular location is the secreted. Its function is as follows. Agonist of rat Nav1.3/SCN3A. This toxin increases the peak current amplitude, and potently inhibits the fast inactivation of the channel (EC(50)=120 nM). The inhibition of fast inactivation is voltage-independent (depolarizing voltages ranging from 220 mV to 130 mV). The toxin might bind to the domain IV of the Nav1.3 channel, while domain II might not participate in interacting with the toxin but could determine the efficacy of RTX-VII. In vivo, when intracerebroventricularly injected into mice, the toxin causes involuntary body twitching (seizure-like symptoms). This chain is RTX-VII, found in Macrothele raveni (Funnel-web spider).